The sequence spans 278 residues: Urease accessory protein UreD (278 aa).

This sequence belongs to the UreD family. In terms of assembly, ureD, UreF and UreG form a complex that acts as a GTP-hydrolysis-dependent molecular chaperone, activating the urease apoprotein by helping to assemble the nickel containing metallocenter of UreC. The UreE protein probably delivers the nickel.

The protein localises to the cytoplasm. Required for maturation of urease via the functional incorporation of the urease nickel metallocenter. The chain is Urease accessory protein UreD from Staphylococcus aureus (strain bovine RF122 / ET3-1).